We begin with the raw amino-acid sequence, 396 residues long: Flavohemoprotein (396 aa).

In terms of domain architecture, Globin spans 1–136 (MLDAQTIATV…LANVFINREA (136 aa)). Histidine 85 lines the heme b pocket. Residues tyrosine 95 and glutamate 135 each act as charge relay system in the active site. A reductase region spans residues 147–396 (GGWEGTRDFR…YECFGPHKVL (250 aa)). Residues 150-255 (EGTRDFRIVA…VAPAGDFFMA (106 aa)) enclose the FAD-binding FR-type domain. FAD-binding positions include tyrosine 188 and 204–207 (RQYS). Position 268-273 (268-273 (GVGQTP)) interacts with NADP(+). 389 to 392 (CFGP) provides a ligand contact to FAD.

This sequence belongs to the globin family. Two-domain flavohemoproteins subfamily. The protein in the C-terminal section; belongs to the flavoprotein pyridine nucleotide cytochrome reductase family. Monomer. The cofactor is FAD. Heme b is required as a cofactor.

The protein localises to the cytoplasm. The catalysed reaction is 2 nitric oxide + NADPH + 2 O2 = 2 nitrate + NADP(+) + H(+). It carries out the reaction 2 nitric oxide + NADH + 2 O2 = 2 nitrate + NAD(+) + H(+). Its function is as follows. Is involved in NO detoxification in an aerobic process, termed nitric oxide dioxygenase (NOD) reaction that utilizes O(2) and NAD(P)H to convert NO to nitrate, which protects the bacterium from various noxious nitrogen compounds. Therefore, plays a central role in the inducible response to nitrosative stress. Functionally, in the presence of oxygen and NADH, HMP has NADH oxidase activity, which leads to the generation of superoxide and H(2)O(2), both in vitro and in vivo, and it has been suggested that HMP might act as an amplifier of superoxide stress. Under anaerobic conditions, HMP also exhibits nitric oxide reductase and FAD reductase activities. However, all these reactions are much lower than NOD activity. Various electron acceptors are also reduced by HMP in vitro, including dihydropterine, ferrisiderophores, ferric citrate, cytochrome c, nitrite, S-nitrosoglutathione, and alkylhydroperoxides. However, it is unknown if these reactions are of any biological significance in vivo. This chain is Flavohemoprotein (hmp), found in Escherichia coli (strain K12).